The sequence spans 225 residues: Transcriptional activator protein BglJ (225 aa).

Residues 146–211 form the HTH luxR-type domain; it reads YINQSRTLSP…GLLEAADILL (66 aa). A DNA-binding region (H-T-H motif) is located at residues 170-189; that stretch reads MTQIAEQLKRNIKTIRAHKF.

In terms of assembly, forms a complex with RcsB; genetically both BglJ and RcsB are required to relieve bgl operon repression by H-NS and by StpA.

In terms of biological role, a crytic transcriptional activator. When its expression is induced it relieves H-NS repression of the bgl operon. Acts independently of transcription factor LeuO. This is Transcriptional activator protein BglJ (bglJ) from Escherichia coli (strain K12).